The sequence spans 369 residues: MSRSIRNQDVPELPRRRQVRTVGMSGNYWYVVEIDGRLKPRQVKRVRFWGQDIALFRDAAGELHAVEDRCPHRQLPLSQGFVEGGNLVCTYHGWKFDGCGRCTEIHHELGKGRTRLPRIRIRTYPVKAQWGLIWLFPGDPALADGTPLPTIPQLEGGRPWPFFPIDVTIKAHFSMIVENVCDFNHEYLHRHKRPFLQPILREWKQDADSVRVYYDTRFDGSPVAKLFMEGGARDLNEIEIWYQYPYQGSDIGGKYIHWLFMLPEDERTTRCFFVFLFGPIHVPIVNWKMPEFLRKPILWFTNKWYIEPLLGEDKWALELEQDGFERHPDAPQIELNPAISSFQRLSLEKWKAYQQSMERAGPKPAADPA.

The region spanning 29 to 135 (WYVVEIDGRL…VKAQWGLIWL (107 aa)) is the Rieske domain. [2Fe-2S] cluster-binding residues include C70, H72, C89, and H92.

The cofactor is [2Fe-2S] cluster.

The enzyme catalyses a 3beta-hydroxy-4,4-dimethylsteroid + 3 NADH + 3 O2 + 2 H(+) = a 3beta-hydroxy-4alpha-methylsteroid-4beta-carboxylate + 3 NAD(+) + 4 H2O. The catalysed reaction is 4,4-dimethyl-5alpha-cholesta-8,24-dien-3beta-ol + 3 NADH + 3 O2 + 2 H(+) = 4beta-carboxy-4alpha-methyl-5alpha-cholesta-8,24-dien-3beta-ol + 3 NAD(+) + 4 H2O. It catalyses the reaction a 3beta-hydroxy-4,4-dimethylsteroid + NADH + O2 + H(+) = a 3beta-hydroxy-4beta-hydroxymethyl-4alpha-methylsteroid + NAD(+) + H2O. It carries out the reaction a 3beta-hydroxy-4beta-hydroxymethyl-4alpha-methylsteroid + NADH + O2 + H(+) = a 3beta-hydroxy-4beta-formyl-4alpha-methylsteroid + NAD(+) + 2 H2O. The enzyme catalyses a 3beta-hydroxy-4beta-formyl-4alpha-methylsteroid + NADH + O2 = a 3beta-hydroxy-4alpha-methylsteroid-4beta-carboxylate + NAD(+) + H2O. The catalysed reaction is 4,4-dimethyl-5alpha-cholesta-8,24-dien-3beta-ol + NADH + O2 + H(+) = 4beta-hydroxymethyl-4alpha-methylzymosterol + NAD(+) + H2O. It catalyses the reaction 4beta-hydroxymethyl-4alpha-methylzymosterol + NADH + O2 + H(+) = 4beta-formylmethyl-4alpha-methyl-5alpha-cholesta-8,24-dien-3beta-ol + NAD(+) + 2 H2O. It carries out the reaction 4beta-formylmethyl-4alpha-methyl-5alpha-cholesta-8,24-dien-3beta-ol + NADH + O2 = 4beta-carboxy-4alpha-methyl-5alpha-cholesta-8,24-dien-3beta-ol + NAD(+) + H2O. The protein operates within steroid biosynthesis; sterol biosynthesis. Its function is as follows. Participates in the biosynthesis of bacterial sterols. Together with SdmB, removes one methyl group from the C-4 position of 4,4-dimethylated steroid molecules. SdmA oxidizes the sterol 4beta-methyl group into first a hydroxyl, then an aldehyde and finally a carboxylic acid group. The polypeptide is 4beta-methylsterol monooxygenase (Methylococcus capsulatus (strain ATCC 33009 / NCIMB 11132 / Bath)).